We begin with the raw amino-acid sequence, 144 residues long: MRWPMQNRTTAVIAVALATTALVACSSRSASAVSSTATVTVDGKDSTMHIVKCTQLEWYRMINIGSDFAGAKIVIDQRAHPVTAESVRIQNLNGFTGMYSRGGDGNADLRLSGDKFTITGTAHGYKADKPGDAATATFKIVTAC.

Positions 1–24 are cleaved as a signal peptide; that stretch reads MRWPMQNRTTAVIAVALATTALVA. The N-palmitoyl cysteine moiety is linked to residue Cys-25. Residue Cys-25 is the site of S-diacylglycerol cysteine attachment.

Belongs to the mycobacterial 19 kDa antigen family.

The protein resides in the cell membrane. In Mycobacterium avium subsp. hominissuis (strain TH135), this protein is Putative lipoprotein MAH_0816.